Reading from the N-terminus, the 245-residue chain is MNYPQEKIKPYSNDGKKSEQVEQMFDNIAPAYDQLNHTLSLGIDRSWRRKAINWLKPFRPQQIMDVATGTGDFAILACHELQPEQLIGTDISEGMMNVGREKVKKEGLSEKISFAREDCTSLSFADNRFDAITVAFGIRNFEDLDKGLSEMYRVLKTGGHLVILELTTPDRFPMKQMFTIYSKIVIPTLGKLLSKDNSAYSYLPQTIKAFPQGEVMKNVISRVGFSQVQFRRLTFGICTLYTATK.

S-adenosyl-L-methionine-binding positions include Thr70, Asp90, and 118–119; that span reads DC.

This sequence belongs to the class I-like SAM-binding methyltransferase superfamily. MenG/UbiE family.

The enzyme catalyses a 2-demethylmenaquinol + S-adenosyl-L-methionine = a menaquinol + S-adenosyl-L-homocysteine + H(+). The protein operates within quinol/quinone metabolism; menaquinone biosynthesis; menaquinol from 1,4-dihydroxy-2-naphthoate: step 2/2. Methyltransferase required for the conversion of demethylmenaquinol (DMKH2) to menaquinol (MKH2). This is Demethylmenaquinone methyltransferase from Bacteroides fragilis (strain ATCC 25285 / DSM 2151 / CCUG 4856 / JCM 11019 / LMG 10263 / NCTC 9343 / Onslow / VPI 2553 / EN-2).